The chain runs to 502 residues: Glycogen synthase 1 (502 aa).

An ADP-alpha-D-glucose-binding site is contributed by Lys18.

The protein belongs to the glycosyltransferase 1 family. Bacterial/plant glycogen synthase subfamily.

It carries out the reaction [(1-&gt;4)-alpha-D-glucosyl](n) + ADP-alpha-D-glucose = [(1-&gt;4)-alpha-D-glucosyl](n+1) + ADP + H(+). It participates in glycan biosynthesis; glycogen biosynthesis. Functionally, synthesizes alpha-1,4-glucan chains using ADP-glucose. This is Glycogen synthase 1 from Geobacter metallireducens (strain ATCC 53774 / DSM 7210 / GS-15).